Here is an 885-residue protein sequence, read N- to C-terminus: Envelope glycoprotein gp160 (885 aa).

Positions 1-23 (MGCLGNQLLIALLLVSVLEICCV) are cleaved as a signal peptide. The Extracellular segment spans residues 24–700 (QYVTVFYGVP…TSWIRYIQYG (677 aa)). A glycan (N-linked (GlcNAc...) asparagine; by host) is linked at N37. Cysteines 44 and 57 form a disulfide. N70, N114, N148, N156, N173, N186, N201, N213, N245, N255, N279, N285, N296, N307, N317, N372, and N378 each carry an N-linked (GlcNAc...) asparagine; by host glycan. 5 disulfides stabilise this stretch: C101–C221, C108–C212, C113–C170, C234–C264, and C244–C256. Positions 113–169 (CNKTETDRWGLTGNAGTTTTAITTTATPSVAENVINESNPCIKNNSCAGLEQEPMIG) are V1. Residues 170 to 212 (CKFNMTGLNRDKKKEYNETWYSRDLICEQSANESESKCYMHHC) are V2. A V3 region spans residues 312–344 (CRRPENKTVLPVTIMSGLVFHSQPINERPKQAW). Cysteines 312 and 345 form a disulfide. 2 disulfides stabilise this stretch: C396/C465 and C403/C438. The segment at 403-438 (CKMNWFLNWVEDRDQKGGRWKQQNRKEQQKKNYVPC) is V4. 3 N-linked (GlcNAc...) asparagine; by host glycosylation sites follow: N466, N482, and N485. Residues 481–488 (SNETNITM) form a V5 region. Residues 532 to 552 (GVFVLGFLGFLATAGSAMGAA) form a fusion peptide region. An immunosuppression region spans residues 595-611 (LQTRVTAIEKYLKDQAQ). N-linked (GlcNAc...) asparagine; by host glycans are attached at residues N631, N640, and N656. Residues 640–672 (NMTWQEWERQVDFLEANITQLLEEAQIQQEKNM) are a coiled coil. The MPER; binding to GalCer stretch occupies residues 677 to 698 (KLNSWDIFGNWFDLTSWIRYIQ). A helical membrane pass occupies residues 701–721 (VLIVLGVIGLRIVIYVVQMLA). The Cytoplasmic portion of the chain corresponds to 722-885 (RLRQGYRPVF…IRQGLELTLL (164 aa)). The YXXV motif; contains endocytosis signal signature appears at 727–730 (YRPV). The tract at residues 743–764 (IHKGQEPPTKEGEEGDGGDRGG) is disordered. The segment covering 745–764 (KGQEPPTKEGEEGDGGDRGG) has biased composition (basic and acidic residues). The S-palmitoyl cysteine; by host moiety is linked to residue C793. Positions 884-885 (LL) match the Di-leucine internalization motif motif.

As to quaternary structure, the mature envelope protein (Env) consists of a homotrimer of non-covalently associated gp120-gp41 heterodimers. The resulting complex protrudes from the virus surface as a spike. Interacts with host CD4 and CCR5. Gp120 also interacts with the C-type lectins CD209/DC-SIGN and CLEC4M/DC-SIGNR (collectively referred to as DC-SIGN(R)). The mature envelope protein (Env) consists of a homotrimer of non-covalently associated gp120-gp41 heterodimers. The resulting complex protrudes from the virus surface as a spike. Post-translationally, specific enzymatic cleavages in vivo yield mature proteins. Envelope glycoproteins are synthesized as an inactive precursor that is heavily N-glycosylated and processed likely by host cell furin in the Golgi to yield the mature SU and TM proteins. The cleavage site between SU and TM requires the minimal sequence [KR]-X-[KR]-R. In terms of processing, palmitoylation of the transmembrane protein and of Env polyprotein (prior to its proteolytic cleavage) is essential for their association with host cell membrane lipid rafts. Palmitoylation is therefore required for envelope trafficking to classical lipid rafts, but not for viral replication.

The protein localises to the virion membrane. Its subcellular location is the host cell membrane. The protein resides in the host endosome membrane. Its function is as follows. The surface protein gp120 (SU) attaches the virus to the host lymphoid cell by binding to the primary receptor CD4. This interaction induces a structural rearrangement creating a high affinity binding site for a chemokine coreceptor like CCR5. This peculiar 2 stage receptor-interaction strategy allows gp120 to maintain the highly conserved coreceptor-binding site in a cryptic conformation, protected from neutralizing antibodies. These changes are transmitted to the transmembrane protein gp41 and are thought to activate its fusogenic potential by unmasking its fusion peptide. Functionally, surface protein gp120 (SU) may target the virus to gut-associated lymphoid tissue (GALT) by binding host ITGA4/ITGB7 (alpha-4/beta-7 integrins), a complex that mediates T-cell migration to the GALT. Interaction between gp120 and ITGA4/ITGB7 would allow the virus to enter GALT early in the infection, infecting and killing most of GALT's resting CD4+ T-cells. This T-cell depletion is believed to be the major insult to the host immune system leading to AIDS. In terms of biological role, the surface protein gp120 is a ligand for CD209/DC-SIGN and CLEC4M/DC-SIGNR, which are respectively found on dendritic cells (DCs), and on endothelial cells of liver sinusoids and lymph node sinuses. These interactions allow capture of viral particles at mucosal surfaces by these cells and subsequent transmission to permissive cells. DCs are professional antigen presenting cells, critical for host immunity by inducing specific immune responses against a broad variety of pathogens. They act as sentinels in various tissues where they take up antigen, process it, and present it to T-cells following migration to lymphoid organs. SIV subverts the migration properties of dendritic cells to gain access to CD4+ T-cells in lymph nodes. Virus transmission to permissive T-cells occurs either in trans (without DCs infection, through viral capture and transmission), or in cis (following DCs productive infection, through the usual CD4-gp120 interaction), thereby inducing a robust infection. In trans infection, bound virions remain infectious over days and it is proposed that they are not degraded, but protected in non-lysosomal acidic organelles within the DCs close to the cell membrane thus contributing to the viral infectious potential during DCs' migration from the periphery to the lymphoid tissues. On arrival at lymphoid tissues, intact virions recycle back to DCs' cell surface allowing virus transmission to CD4+ T-cells. Virion capture also seems to lead to MHC-II-restricted viral antigen presentation, and probably to the activation of SIV-specific CD4+ cells. The transmembrane protein gp41 (TM) acts as a class I viral fusion protein. Under the current model, the protein has at least 3 conformational states: pre-fusion native state, pre-hairpin intermediate state, and post-fusion hairpin state. During fusion of viral and target intracellular membranes, the coiled coil regions (heptad repeats) assume a trimer-of-hairpins structure, positioning the fusion peptide in close proximity to the C-terminal region of the ectodomain. The formation of this structure appears to drive apposition and subsequent fusion of viral and target cell membranes. Complete fusion occurs in host cell endosomes. The virus undergoes clathrin-dependent internalization long before endosomal fusion, thus minimizing the surface exposure of conserved viral epitopes during fusion and reducing the efficacy of inhibitors targeting these epitopes. Membranes fusion leads to delivery of the nucleocapsid into the cytoplasm. Its function is as follows. The envelope glycoprotein gp160 precursor down-modulates cell surface CD4 antigen by interacting with it in the endoplasmic reticulum and blocking its transport to the cell surface. Functionally, the gp120-gp41 heterodimer allows rapid transcytosis of the virus through CD4 negative cells such as simple epithelial monolayers of the intestinal, rectal and endocervical epithelial barriers. Both gp120 and gp41 specifically recognize glycosphingolipids galactosyl-ceramide (GalCer) or 3' sulfo-galactosyl-ceramide (GalS) present in the lipid rafts structures of epithelial cells. Binding to these alternative receptors allows the rapid transcytosis of the virus through the epithelial cells. This transcytotic vesicle-mediated transport of virions from the apical side to the basolateral side of the epithelial cells does not involve infection of the cells themselves. The polypeptide is Envelope glycoprotein gp160 (env) (Cercopithecidae (Old World monkeys)).